Here is a 454-residue protein sequence, read N- to C-terminus: tRNA(Ile)-lysidine synthase (454 aa).

Ser31–Ser36 lines the ATP pocket.

Belongs to the tRNA(Ile)-lysidine synthase family.

The protein resides in the cytoplasm. It carries out the reaction cytidine(34) in tRNA(Ile2) + L-lysine + ATP = lysidine(34) in tRNA(Ile2) + AMP + diphosphate + H(+). Its function is as follows. Ligates lysine onto the cytidine present at position 34 of the AUA codon-specific tRNA(Ile) that contains the anticodon CAU, in an ATP-dependent manner. Cytidine is converted to lysidine, thus changing the amino acid specificity of the tRNA from methionine to isoleucine. The sequence is that of tRNA(Ile)-lysidine synthase from Porphyromonas gingivalis (strain ATCC BAA-308 / W83).